The primary structure comprises 198 residues: Dephospho-CoA kinase (198 aa).

A DPCK domain is found at 3 to 198; it reads VVGLTGGIGA…HRRYSLLAAA (196 aa). 11–16 provides a ligand contact to ATP; it reads GAGKST.

It belongs to the CoaE family.

The protein localises to the cytoplasm. It catalyses the reaction 3'-dephospho-CoA + ATP = ADP + CoA + H(+). The protein operates within cofactor biosynthesis; coenzyme A biosynthesis; CoA from (R)-pantothenate: step 5/5. Its function is as follows. Catalyzes the phosphorylation of the 3'-hydroxyl group of dephosphocoenzyme A to form coenzyme A. The protein is Dephospho-CoA kinase of Methylococcus capsulatus (strain ATCC 33009 / NCIMB 11132 / Bath).